Consider the following 239-residue polypeptide: Serine protease SplC (239 aa).

A signal peptide spans 1–36 (MNKNIVIKSMAALAILTSVTGINAAVVEETQQIANA). Residues histidine 75, aspartate 113, and serine 193 each act as charge relay system in the active site.

It belongs to the peptidase S1B family.

It is found in the secreted. The polypeptide is Serine protease SplC (splC) (Staphylococcus aureus (strain MW2)).